The sequence spans 172 residues: Small ribosomal subunit protein uS5 (172 aa).

In terms of domain architecture, S5 DRBM spans L17–V80.

It belongs to the universal ribosomal protein uS5 family. As to quaternary structure, part of the 30S ribosomal subunit. Contacts proteins S4 and S8.

Functionally, with S4 and S12 plays an important role in translational accuracy. In terms of biological role, located at the back of the 30S subunit body where it stabilizes the conformation of the head with respect to the body. This is Small ribosomal subunit protein uS5 from Verminephrobacter eiseniae (strain EF01-2).